We begin with the raw amino-acid sequence, 91 residues long: Probable Fe(2+)-trafficking protein (91 aa).

It belongs to the Fe(2+)-trafficking protein family. Monomer.

In terms of biological role, could be a mediator in iron transactions between iron acquisition and iron-requiring processes, such as synthesis and/or repair of Fe-S clusters in biosynthetic enzymes. The chain is Probable Fe(2+)-trafficking protein from Salmonella agona (strain SL483).